Here is a 390-residue protein sequence, read N- to C-terminus: Endothelial cell-selective adhesion molecule (390 aa).

Positions 1–29 (MISLPGPLVTNLLRFLFLGLSALAPPSRA) are cleaved as a signal peptide. An Ig-like V-type domain is found at 30–143 (ELQLHLPANQ…NGQASGHSIK (114 aa)). The Extracellular portion of the chain corresponds to 30–248 (ELQLHLPANQ…LEVSTGPGAA (219 aa)). N108, N169, N213, and N236 each carry an N-linked (GlcNAc...) asparagine glycan. The Ig-like C2-type domain occupies 156 to 242 (PSCRLQGVPR…AQCNVTLEVS (87 aa)). Residues C174 and C224 are joined by a disulfide bond. A helical membrane pass occupies residues 249 to 269 (VVAGAVVGTLVGLGLLAGLVL). At 270 to 390 (LYHRRGKALE…PAQSQAGSLV (121 aa)) the chain is on the cytoplasmic side. S301 bears the Phosphoserine mark. The segment at 316–365 (ARALRPPHGPPRPGALTPTPSLSSQALPSPRLPTTDGANPQPISLIPGGV) is disordered. Phosphothreonine is present on residues T332 and T334. Residues 333 to 342 (PTPSLSSQAL) show a composition bias toward polar residues. A phosphoserine mark is found at S336, S339, S344, and S371.

In terms of assembly, interacts with MAGI1.

It is found in the cell junction. The protein resides in the adherens junction. It localises to the tight junction. Its subcellular location is the cell membrane. Functionally, can mediate aggregation most likely through a homophilic molecular interaction. This is Endothelial cell-selective adhesion molecule (ESAM) from Macaca fascicularis (Crab-eating macaque).